Here is a 1241-residue protein sequence, read N- to C-terminus: ATP-dependent helicase/nuclease subunit A (1241 aa).

In terms of domain architecture, UvrD-like helicase ATP-binding spans 12-485 (SQWTDDQWKA…IDLAKNFRSR (474 aa)). 33–40 (AAAGSGKT) contacts ATP. Residues 505 to 805 (GEIDYDADAE…RIMTIHKSKG (301 aa)) enclose the UvrD-like helicase C-terminal domain.

The protein belongs to the helicase family. AddA subfamily. Heterodimer of AddA and AddB/RexB. Requires Mg(2+) as cofactor.

It catalyses the reaction Couples ATP hydrolysis with the unwinding of duplex DNA by translocating in the 3'-5' direction.. It carries out the reaction ATP + H2O = ADP + phosphate + H(+). In terms of biological role, the heterodimer acts as both an ATP-dependent DNA helicase and an ATP-dependent, dual-direction single-stranded exonuclease. Recognizes the chi site generating a DNA molecule suitable for the initiation of homologous recombination. The AddA nuclease domain is required for chi fragment generation; this subunit has the helicase and 3' -&gt; 5' nuclease activities. This Bacillus thuringiensis subsp. konkukian (strain 97-27) protein is ATP-dependent helicase/nuclease subunit A.